The following is a 205-amino-acid chain: MKKELILKALKLRDMGFPSGDIAEELNISVKTALYLTLNGEELLKAGETPKEDSEKLDIFLEWDNVRASSRRLRNISKIICDMLSDVEFDGVVGISSGGVPLATLISDELDKNFSIYVPKKHVHTEKEKTTGFIGQNMSSIVGKDVIIVDDVMTSGNSVKETIKYLKGIANPKKVFVVMDKSGIDEIDGVRIEHLFRTGVVDIKK.

It belongs to the purine/pyrimidine phosphoribosyltransferase family. GfcR subfamily.

This chain is Transcriptional regulator GfcR, found in Methanococcus maripaludis (strain C7 / ATCC BAA-1331).